Consider the following 94-residue polypeptide: Neurotoxin LmNaTx45.2 (94 aa).

Positions 1 to 18 (MKLAILSLFLVFQIGVES) are cleaved as a signal peptide. An LCN-type CS-alpha/beta domain is found at 20–86 (KNGFALDHYG…IGDSRKNYCD (67 aa)). 4 cysteine pairs are disulfide-bonded: C34/C85, C44/C63, C48/C65, and C59/C85.

Belongs to the long (4 C-C) scorpion toxin superfamily. Sodium channel inhibitor family. Beta subfamily. In terms of tissue distribution, expressed by the venom gland.

Its subcellular location is the secreted. Its function is as follows. Binds voltage-independently at site-4 of sodium channels (Nav) and shift the voltage of activation toward more negative potentials thereby affecting sodium channel activation and promoting spontaneous and repetitive firing. The sequence is that of Neurotoxin LmNaTx45.2 from Lychas mucronatus (Chinese swimming scorpion).